Reading from the N-terminus, the 247-residue chain is Ribosomal RNA small subunit methyltransferase G (247 aa).

S-adenosyl-L-methionine contacts are provided by residues G84, F89, 136–137, and R155; that span reads AE.

Belongs to the methyltransferase superfamily. RNA methyltransferase RsmG family.

The protein resides in the cytoplasm. In terms of biological role, specifically methylates the N7 position of a guanine in 16S rRNA. The sequence is that of Ribosomal RNA small subunit methyltransferase G from Prochlorococcus marinus (strain MIT 9303).